We begin with the raw amino-acid sequence, 293 residues long: TBC1 domain family member 7 (293 aa).

The region spanning 50–231 (PLPSMYRALV…RVWDKVVSGS (182 aa)) is the Rab-GAP TBC domain.

As to quaternary structure, component of the TSC-TBC complex (also named Rhebulator complex), composed of 2 molecules of TSC1, 2 molecules of TSC2 and 1 molecule of TBC1D7. Interacts with TSC1 (via C-terminal half of the coiled-coil domain). As to expression, highly expressed in heart, and slightly in kidney, liver and placenta.

It localises to the lysosome membrane. Its subcellular location is the cytoplasmic vesicle. The protein resides in the cytoplasm. The protein localises to the cytosol. Non-catalytic component of the TSC-TBC complex, a multiprotein complex that acts as a negative regulator of the canonical mTORC1 complex, an evolutionarily conserved central nutrient sensor that stimulates anabolic reactions and macromolecule biosynthesis to promote cellular biomass generation and growth. The TSC-TBC complex acts as a GTPase-activating protein (GAP) for the small GTPase RHEB, a direct activator of the protein kinase activity of mTORC1. In absence of nutrients, the TSC-TBC complex inhibits mTORC1, thereby preventing phosphorylation of ribosomal protein S6 kinase (RPS6KB1 and RPS6KB2) and EIF4EBP1 (4E-BP1) by the mTORC1 signaling. The TSC-TBC complex is inactivated in response to nutrients, relieving inhibition of mTORC1. This Homo sapiens (Human) protein is TBC1 domain family member 7.